Consider the following 100-residue polypeptide: Aspartyl/glutamyl-tRNA(Asn/Gln) amidotransferase subunit C (100 aa).

It belongs to the GatC family. As to quaternary structure, heterotrimer of A, B and C subunits.

It catalyses the reaction L-glutamyl-tRNA(Gln) + L-glutamine + ATP + H2O = L-glutaminyl-tRNA(Gln) + L-glutamate + ADP + phosphate + H(+). The catalysed reaction is L-aspartyl-tRNA(Asn) + L-glutamine + ATP + H2O = L-asparaginyl-tRNA(Asn) + L-glutamate + ADP + phosphate + 2 H(+). In terms of biological role, allows the formation of correctly charged Asn-tRNA(Asn) or Gln-tRNA(Gln) through the transamidation of misacylated Asp-tRNA(Asn) or Glu-tRNA(Gln) in organisms which lack either or both of asparaginyl-tRNA or glutaminyl-tRNA synthetases. The reaction takes place in the presence of glutamine and ATP through an activated phospho-Asp-tRNA(Asn) or phospho-Glu-tRNA(Gln). This is Aspartyl/glutamyl-tRNA(Asn/Gln) amidotransferase subunit C from Novosphingobium aromaticivorans (strain ATCC 700278 / DSM 12444 / CCUG 56034 / CIP 105152 / NBRC 16084 / F199).